Reading from the N-terminus, the 424-residue chain is Enolase (424 aa).

Gln165 contributes to the (2R)-2-phosphoglycerate binding site. Residue Glu207 is the Proton donor of the active site. The Mg(2+) site is built by Asp244, Glu283, and Asp310. 4 residues coordinate (2R)-2-phosphoglycerate: Lys335, Arg364, Ser365, and Lys386. Lys335 functions as the Proton acceptor in the catalytic mechanism.

The protein belongs to the enolase family. The cofactor is Mg(2+).

The protein resides in the cytoplasm. It is found in the secreted. The protein localises to the cell surface. It catalyses the reaction (2R)-2-phosphoglycerate = phosphoenolpyruvate + H2O. Its pathway is carbohydrate degradation; glycolysis; pyruvate from D-glyceraldehyde 3-phosphate: step 4/5. Catalyzes the reversible conversion of 2-phosphoglycerate (2-PG) into phosphoenolpyruvate (PEP). It is essential for the degradation of carbohydrates via glycolysis. The chain is Enolase from Chlamydia trachomatis serovar D (strain ATCC VR-885 / DSM 19411 / UW-3/Cx).